A 243-amino-acid polypeptide reads, in one-letter code: HTH-type transcriptional regulator MlrA (243 aa).

Positions 3-72 (LYTIGEVALL…VSKVKMLLSN (70 aa)) constitute an HTH merR-type domain. Residues 6-25 (IGEVALLCDINPVTLRAWQR) constitute a DNA-binding region (H-T-H motif).

Interacts with DgcM and PdeR.

Its activity is regulated as follows. Activity is regulated by DgcM and PdeR. Its function is as follows. Activates transcription of csgD, the master regulator of biofilm formation, by binding to its promoter region. Also controls the transcription of cadC and ibaG. Part of a signaling cascade that regulates curli biosynthesis. The cascade is composed of two c-di-GMP control modules, in which c-di-GMP controlled by the DgcE/PdeH pair (module I) regulates the activity of the DgcM/PdeR pair (module II), which in turn regulates activity of the transcription factor MlrA. The chain is HTH-type transcriptional regulator MlrA from Escherichia coli (strain K12).